The chain runs to 184 residues: Large ribosomal subunit protein uL6 (184 aa).

The protein belongs to the universal ribosomal protein uL6 family. Part of the 50S ribosomal subunit.

Its function is as follows. This protein binds to the 23S rRNA, and is important in its secondary structure. It is located near the subunit interface in the base of the L7/L12 stalk, and near the tRNA binding site of the peptidyltransferase center. This chain is Large ribosomal subunit protein uL6, found in Methanosphaera stadtmanae (strain ATCC 43021 / DSM 3091 / JCM 11832 / MCB-3).